A 239-amino-acid chain; its full sequence is Protein GrpE (239 aa).

2 disordered regions span residues Met-1–Glu-50 and Met-209–Val-239. Residues Val-16–Ala-30 show a composition bias toward polar residues. A compositionally biased stretch (acidic residues) spans Glu-218–Val-239.

Belongs to the GrpE family. In terms of assembly, homodimer.

It localises to the cytoplasm. Participates actively in the response to hyperosmotic and heat shock by preventing the aggregation of stress-denatured proteins, in association with DnaK and GrpE. It is the nucleotide exchange factor for DnaK and may function as a thermosensor. Unfolded proteins bind initially to DnaJ; upon interaction with the DnaJ-bound protein, DnaK hydrolyzes its bound ATP, resulting in the formation of a stable complex. GrpE releases ADP from DnaK; ATP binding to DnaK triggers the release of the substrate protein, thus completing the reaction cycle. Several rounds of ATP-dependent interactions between DnaJ, DnaK and GrpE are required for fully efficient folding. This chain is Protein GrpE, found in Prochlorococcus marinus (strain MIT 9312).